We begin with the raw amino-acid sequence, 569 residues long: MFKMYRSPHITRNSFKYLKATNINSCRFYAKEVRFGPDVRSLMLQGVDILADADDVTMGPKGVNVILAKNLGPPKITKDGVTVAKGIDLKDKFQNIGARLVQNVANKTNEEAGDGTTTATVLARPIAKEGFENISRGANPIEIRKGVMLAVESVKRQLKEMSKPVNTSEEIEQVATISANGDESIGKLIAAAMNRVGKNGVITVKDGKTLEDELEIIEGMKFDRGYVSPYFINSNKGPKVEYNDALVLYSEKKIYYASQVVPALELANSQKKPLVIIAEDYDGEPLSVLVVNKLKIGLPVVAVKAPGFGEYRTNALLDMAAATGGVFEDDTNLVRLEDCQAESFGQVGEVIITKDSTLLLKGKGDPNEIKQRIDQIKEELETATSNYDRERLIDRLGRLQSGVAVLLIGGCSEVEVNEKKDRVNDALNATRAAVEEGIVPGGGAALLRCIPALDLLKPANKDQEIGVSIIKKALRTPCITIASNAGFDGAVVVSKVEDMGPEYGYDALNNEYVNMIEKGIIDPTKVVRRALTDASGVASLLTTAEAVICDMPKQKDPPPEYAPIGGGDY.

The N-terminal 29 residues, 1–29, are a transit peptide targeting the mitochondrion; that stretch reads MFKMYRSPHITRNSFKYLKATNINSCRFY.

Belongs to the chaperonin (HSP60) family. In terms of assembly, forms a single seven-member ring complex, in tight association with the p60 protein. As to expression, testis.

Its subcellular location is the mitochondrion. In terms of biological role, implicated in mitochondrial protein import and macromolecular assembly. May facilitate the correct folding of imported proteins. May also prevent misfolding and promote the refolding and proper assembly of unfolded polypeptides generated under stress conditions in the mitochondrial matrix. The sequence is that of 63 kDa chaperonin, mitochondrial from Heliothis virescens (Tobacco budworm moth).